Here is a 273-residue protein sequence, read N- to C-terminus: SPRY domain-containing SOCS box protein 1 (273 aa).

Residue Tyr-31 is modified to Phosphotyrosine. The region spanning 33-231 (KPTRLDLLLD…IRMRYLNGLD (199 aa)) is the B30.2/SPRY domain. One can recognise an SOCS box domain in the interval 232–273 (PEPLPLMDLCRRSVRLALGKERLGAIPALPLPASLKAYLLYQ).

It belongs to the SPSB family. In terms of assembly, component of the probable ECS(SPSB1) E3 ubiquitin-protein ligase complex which contains CUL5, RNF7/RBX2, Elongin BC complex and SPSB1. Interacts with CUL5, RNF7, ELOB and ELOC. Directly interacts with MET tyrosine kinase domain in the presence and in the absence of HGF, however HGF treatment has a positive effect on this interaction. When phosphorylated, interacts with RASA1 without affecting its stability. Interacts (via B30.2/SPRY domain) with PAWR; this interaction is direct and occurs in association with the Elongin BC complex. Interacts with EPHB2. Interacts with NOS2.

It is found in the cytoplasm. It localises to the cytosol. It functions in the pathway protein modification; protein ubiquitination. Functionally, substrate recognition component of a SCF-like ECS (Elongin BC-CUL2/5-SOCS-box protein) E3 ubiquitin-protein ligase complex which mediates the ubiquitination and subsequent proteasomal degradation of target proteins. Negatively regulates nitric oxide (NO) production and limits cellular toxicity in activated macrophages by mediating the ubiquitination and proteasomal degradation of NOS2. Acts as a bridge which links the NOS2 with the ECS E3 ubiquitin ligase complex components ELOC and CUL5. This Mus musculus (Mouse) protein is SPRY domain-containing SOCS box protein 1 (Spsb1).